A 269-amino-acid polypeptide reads, in one-letter code: uncharacterized protein (269 aa).

NADP(+) is bound at residue 15 to 41; sequence QKSVLITGCSSGIGLESALELKRQGFH. A substrate-binding site is contributed by S146. Y159 acts as the Proton acceptor in catalysis.

This sequence belongs to the short-chain dehydrogenases/reductases (SDR) family.

This is an uncharacterized protein from Escherichia coli O6:H1 (strain CFT073 / ATCC 700928 / UPEC).